A 226-amino-acid polypeptide reads, in one-letter code: Protein BASIC PENTACYSTEINE7 (226 aa).

Positions 42 to 116 (IDLSQEPPAE…PSIPETKREK (75 aa)) are disordered. A compositionally biased stretch (basic and acidic residues) spans 66 to 76 (RDSRNDTETVK). The segment covering 88–105 (LKPKPQRKKRSVSNKSKK) has biased composition (basic residues).

This sequence belongs to the BBR/BPC family. As to expression, expressed in seedlings, leaves and pistils. Detected in anthers, in pollen grains, in young rosette, in leaf vasculature, in the lateral and primary roots, in embryo sac, and in the whole ovule.

The protein localises to the nucleus. Transcriptional regulator that specifically binds to GA-rich elements (GAGA-repeats) present in regulatory sequences of genes involved in developmental processes. This Arabidopsis thaliana (Mouse-ear cress) protein is Protein BASIC PENTACYSTEINE7 (BPC7).